Consider the following 98-residue polypeptide: Large ribosomal subunit protein uL23 (98 aa).

The protein belongs to the universal ribosomal protein uL23 family. Part of the 50S ribosomal subunit. Contacts protein L29, and trigger factor when it is bound to the ribosome.

In terms of biological role, one of the early assembly proteins it binds 23S rRNA. One of the proteins that surrounds the polypeptide exit tunnel on the outside of the ribosome. Forms the main docking site for trigger factor binding to the ribosome. The chain is Large ribosomal subunit protein uL23 from Bifidobacterium animalis subsp. lactis (strain AD011).